The primary structure comprises 409 residues: Elongation factor Tu (409 aa).

Residues 10 to 214 (KPHVNIGTIG…AVDSYIPDPE (205 aa)) enclose the tr-type G domain. The tract at residues 19 to 26 (GHVDHGKT) is G1. 19-26 (GHVDHGKT) provides a ligand contact to GTP. Residue Thr-26 coordinates Mg(2+). The G2 stretch occupies residues 60-64 (GITIN). Residues 81 to 84 (DCPG) form a G3 region. GTP-binding positions include 81-85 (DCPGH) and 136-139 (NKED). A G4 region spans residues 136 to 139 (NKED). The interval 174–176 (SGL) is G5.

Belongs to the TRAFAC class translation factor GTPase superfamily. Classic translation factor GTPase family. EF-Tu/EF-1A subfamily. Monomer.

The protein localises to the cytoplasm. It catalyses the reaction GTP + H2O = GDP + phosphate + H(+). Its function is as follows. GTP hydrolase that promotes the GTP-dependent binding of aminoacyl-tRNA to the A-site of ribosomes during protein biosynthesis. In Trichormus variabilis (strain ATCC 29413 / PCC 7937) (Anabaena variabilis), this protein is Elongation factor Tu.